Here is a 108-residue protein sequence, read N- to C-terminus: MDQFECINVEEAHQKLHQGTAVLVDIRDPQSYAMGHTPQAFHLTNDTLGAFMRDHDFDTVVMVMCYHGNSSKGAAQYLLQQGYDAVYSIDGGFDAWHRHFPSEVAFGA.

One can recognise a Rhodanese domain in the interval 17–105 (HQGTAVLVDI…WHRHFPSEVA (89 aa)). Catalysis depends on C65, which acts as the Cysteine persulfide intermediate.

The protein belongs to the GlpE family.

Its subcellular location is the cytoplasm. It catalyses the reaction thiosulfate + hydrogen cyanide = thiocyanate + sulfite + 2 H(+). It carries out the reaction thiosulfate + [thioredoxin]-dithiol = [thioredoxin]-disulfide + hydrogen sulfide + sulfite + 2 H(+). In terms of biological role, transferase that catalyzes the transfer of sulfur from thiosulfate to thiophilic acceptors such as cyanide or dithiols. May function in a CysM-independent thiosulfate assimilation pathway by catalyzing the conversion of thiosulfate to sulfite, which can then be used for L-cysteine biosynthesis. The chain is Thiosulfate sulfurtransferase GlpE from Citrobacter koseri (strain ATCC BAA-895 / CDC 4225-83 / SGSC4696).